A 264-amino-acid chain; its full sequence is Thymidylate synthase (264 aa).

R21 is a binding site for dUMP. (6R)-5,10-methylene-5,6,7,8-tetrahydrofolate is bound at residue H51. Residue 126–127 coordinates dUMP; the sequence is RR. Residue C146 is the Nucleophile of the active site. DUMP contacts are provided by residues 166–169, N177, and 207–209; these read RSCD and HLY. A (6R)-5,10-methylene-5,6,7,8-tetrahydrofolate-binding site is contributed by D169. A263 contacts (6R)-5,10-methylene-5,6,7,8-tetrahydrofolate.

It belongs to the thymidylate synthase family. Bacterial-type ThyA subfamily. Homodimer.

The protein resides in the cytoplasm. The enzyme catalyses dUMP + (6R)-5,10-methylene-5,6,7,8-tetrahydrofolate = 7,8-dihydrofolate + dTMP. It participates in pyrimidine metabolism; dTTP biosynthesis. Catalyzes the reductive methylation of 2'-deoxyuridine-5'-monophosphate (dUMP) to 2'-deoxythymidine-5'-monophosphate (dTMP) while utilizing 5,10-methylenetetrahydrofolate (mTHF) as the methyl donor and reductant in the reaction, yielding dihydrofolate (DHF) as a by-product. This enzymatic reaction provides an intracellular de novo source of dTMP, an essential precursor for DNA biosynthesis. This Photorhabdus laumondii subsp. laumondii (strain DSM 15139 / CIP 105565 / TT01) (Photorhabdus luminescens subsp. laumondii) protein is Thymidylate synthase.